The sequence spans 292 residues: 2-(5''-triphosphoribosyl)-3'-dephosphocoenzyme-A synthase (292 aa).

Belongs to the CitG/MdcB family.

It catalyses the reaction 3'-dephospho-CoA + ATP = 2'-(5''-triphospho-alpha-D-ribosyl)-3'-dephospho-CoA + adenine. In terms of biological role, catalyzes the formation of 2-(5''-triphosphoribosyl)-3'-dephosphocoenzyme-A, the precursor of the prosthetic group of the holo-acyl carrier protein (gamma chain) of citrate lyase, from ATP and dephospho-CoA. This is 2-(5''-triphosphoribosyl)-3'-dephosphocoenzyme-A synthase from Escherichia coli O7:K1 (strain IAI39 / ExPEC).